The following is a 430-amino-acid chain: Serine--tRNA ligase (430 aa).

237–239 (TAE) is a binding site for L-serine. 268 to 270 (RSE) provides a ligand contact to ATP. Glu291 provides a ligand contact to L-serine. Residue 355–358 (EISS) coordinates ATP. Ser391 provides a ligand contact to L-serine.

Belongs to the class-II aminoacyl-tRNA synthetase family. Type-1 seryl-tRNA synthetase subfamily. As to quaternary structure, homodimer. The tRNA molecule binds across the dimer.

It localises to the cytoplasm. It catalyses the reaction tRNA(Ser) + L-serine + ATP = L-seryl-tRNA(Ser) + AMP + diphosphate + H(+). It carries out the reaction tRNA(Sec) + L-serine + ATP = L-seryl-tRNA(Sec) + AMP + diphosphate + H(+). It participates in aminoacyl-tRNA biosynthesis; selenocysteinyl-tRNA(Sec) biosynthesis; L-seryl-tRNA(Sec) from L-serine and tRNA(Sec): step 1/1. Functionally, catalyzes the attachment of serine to tRNA(Ser). Is also able to aminoacylate tRNA(Sec) with serine, to form the misacylated tRNA L-seryl-tRNA(Sec), which will be further converted into selenocysteinyl-tRNA(Sec). This Shigella dysenteriae serotype 1 (strain Sd197) protein is Serine--tRNA ligase.